Here is a 426-residue protein sequence, read N- to C-terminus: Histidine--tRNA ligase (426 aa).

The protein belongs to the class-II aminoacyl-tRNA synthetase family. Homodimer.

The protein resides in the cytoplasm. It catalyses the reaction tRNA(His) + L-histidine + ATP = L-histidyl-tRNA(His) + AMP + diphosphate + H(+). The chain is Histidine--tRNA ligase from Streptococcus pyogenes serotype M1.